Reading from the N-terminus, the 315-residue chain is Homoserine kinase (315 aa).

97-107 (PPARGLGSSAT) provides a ligand contact to ATP.

Belongs to the GHMP kinase family. Homoserine kinase subfamily.

It localises to the cytoplasm. The catalysed reaction is L-homoserine + ATP = O-phospho-L-homoserine + ADP + H(+). The protein operates within amino-acid biosynthesis; L-threonine biosynthesis; L-threonine from L-aspartate: step 4/5. In terms of biological role, catalyzes the ATP-dependent phosphorylation of L-homoserine to L-homoserine phosphate. The chain is Homoserine kinase from Prochlorococcus marinus (strain SARG / CCMP1375 / SS120).